The following is a 360-amino-acid chain: DNA replication and repair protein RecF (360 aa).

ATP is bound at residue 30-37; it reads GQNGSGKT.

The protein belongs to the RecF family.

It localises to the cytoplasm. In terms of biological role, the RecF protein is involved in DNA metabolism; it is required for DNA replication and normal SOS inducibility. RecF binds preferentially to single-stranded, linear DNA. It also seems to bind ATP. In Shewanella baltica (strain OS223), this protein is DNA replication and repair protein RecF.